A 1382-amino-acid polypeptide reads, in one-letter code: Eukaryotic translation initiation factor 3 subunit A (1382 aa).

Residue lysine 68 is modified to N6-acetyllysine. Residues asparagine 82–asparagine 120 are a coiled coil. Positions methionine 315–asparagine 498 constitute a PCI domain. Phosphoserine is present on residues serine 492 and serine 584. Residues leucine 664 to alanine 835 form an interaction with EIF3B region. Disordered stretches follow at residues lysine 810–tyrosine 844 and glutamate 866–arginine 1382. Composition is skewed to basic and acidic residues over residues glutamate 866–arginine 1165, glycine 1177–arginine 1328, and serine 1336–glutamate 1371. Phosphoserine occurs at positions 881, 882, and 895. Copy 1 of the repeat occupies aspartate 925–glutamate 934. A 25 X 10 AA approximate tandem repeats of [DE]-[DE]-[DE]-R-[SEVGFPILV]-[HPSN]-[RSW]-[RL]-[DRGTIHN]-[EPMANLGDT] region spans residues aspartate 925 to leucine 1172. One copy of the 2; truncated repeat lies at glutamate 935 to aspartate 942. 20 repeat units span residues aspartate 943 to proline 952, aspartate 953 to methionine 962, aspartate 963 to proline 972, glutamate 973 to alanine 982, aspartate 983 to threonine 992, aspartate 993 to alanine 1002, aspartate 1003 to alanine 1012, aspartate 1013 to leucine 1022, aspartate 1023 to alanine 1032, aspartate 1033 to methionine 1042, aspartate 1043 to glycine 1052, aspartate 1054 to alanine 1063, aspartate 1064 to leucine 1073, aspartate 1074 to methionine 1083, aspartate 1084 to methionine 1093, aspartate 1094 to methionine 1103, aspartate 1104 to leucine 1113, aspartate 1114 to alanine 1123, aspartate 1124 to alanine 1133, and glutamate 1134 to methionine 1143. Serine 949 is modified (phosphoserine). Phosphoserine is present on serine 1028. One copy of the 23; truncated repeat lies at aspartate 1144–alanine 1152. Residues aspartate 1153–aspartate 1162 form repeat 24. One copy of the 25; approximate repeat lies at aspartate 1163–leucine 1172. Phosphoserine is present on residues serine 1188, serine 1198, serine 1262, serine 1336, and serine 1364.

In terms of assembly, interacts with EIF4G1. Component of the eukaryotic translation initiation factor 3 (eIF-3) complex, which is composed of 13 subunits: EIF3A, EIF3B, EIF3C, EIF3D, EIF3E, EIF3F, EIF3G, EIF3H, EIF3I, EIF3J, EIF3K, EIF3L and EIF3M. The eIF-3 complex appears to include 3 stable modules: module A is composed of EIF3A, EIF3B, EIF3G and EIF3I; module B is composed of EIF3F, EIF3H, and EIF3M; and module C is composed of EIF3C, EIF3D, EIF3E, EIF3L and EIF3K. EIF3C of module C binds EIF3B of module A and EIF3H of module B, thereby linking the three modules. EIF3J is a labile subunit that binds to the eIF-3 complex via EIF3B. The eIF-3 complex interacts with RPS6KB1 under conditions of nutrient depletion. Mitogenic stimulation leads to binding and activation of a complex composed of MTOR and RPTOR, leading to phosphorylation and release of RPS6KB1 and binding of EIF4B to eIF-3. Also interacts with KRT7 and PIWIL2. In terms of processing, phosphorylated. Phosphorylation is enhanced upon serum stimulation.

The protein resides in the cytoplasm. Functionally, RNA-binding component of the eukaryotic translation initiation factor 3 (eIF-3) complex, which is required for several steps in the initiation of protein synthesis. The eIF-3 complex associates with the 40S ribosome and facilitates the recruitment of eIF-1, eIF-1A, eIF-2:GTP:methionyl-tRNAi and eIF-5 to form the 43S pre-initiation complex (43S PIC). The eIF-3 complex stimulates mRNA recruitment to the 43S PIC and scanning of the mRNA for AUG recognition. The eIF-3 complex is also required for disassembly and recycling of post-termination ribosomal complexes and subsequently prevents premature joining of the 40S and 60S ribosomal subunits prior to initiation. The eIF-3 complex specifically targets and initiates translation of a subset of mRNAs involved in cell proliferation, including cell cycling, differentiation and apoptosis, and uses different modes of RNA stem-loop binding to exert either translational activation or repression. Its function is as follows. (Microbial infection) Essential for the initiation of translation on type-1 viral ribosomal entry sites (IRESs), like for HCV, PV, EV71 or BEV translation. In terms of biological role, (Microbial infection) In case of FCV infection, plays a role in the ribosomal termination-reinitiation event leading to the translation of VP2. The sequence is that of Eukaryotic translation initiation factor 3 subunit A from Homo sapiens (Human).